The following is a 486-amino-acid chain: Pup--protein ligase (486 aa).

Glu-33 contacts Mg(2+). Arg-76 contacts ATP. Tyr-78 lines the Mg(2+) pocket. Asp-80 functions as the Proton acceptor in the catalytic mechanism. Glu-86 lines the Mg(2+) pocket. ATP is bound by residues Thr-89 and Trp-451.

The protein belongs to the Pup ligase/Pup deamidase family. Pup-conjugating enzyme subfamily.

The enzyme catalyses ATP + [prokaryotic ubiquitin-like protein]-L-glutamate + [protein]-L-lysine = ADP + phosphate + N(6)-([prokaryotic ubiquitin-like protein]-gamma-L-glutamyl)-[protein]-L-lysine.. It participates in protein degradation; proteasomal Pup-dependent pathway. Its pathway is protein modification; protein pupylation. Functionally, catalyzes the covalent attachment of the prokaryotic ubiquitin-like protein modifier Pup to the proteasomal substrate proteins, thereby targeting them for proteasomal degradation. This tagging system is termed pupylation. The ligation reaction involves the side-chain carboxylate of the C-terminal glutamate of Pup and the side-chain amino group of a substrate lysine. The chain is Pup--protein ligase from Bifidobacterium longum (strain NCC 2705).